We begin with the raw amino-acid sequence, 680 residues long: Oligopeptidase A (680 aa).

His-469 serves as a coordination point for Zn(2+). Glu-470 is an active-site residue. Positions 473 and 476 each coordinate Zn(2+).

Belongs to the peptidase M3 family. Zn(2+) is required as a cofactor.

The catalysed reaction is Hydrolysis of oligopeptides, with broad specificity. Gly or Ala commonly occur as P1 or P1' residues, but more distant residues are also important, as is shown by the fact that Z-Gly-Pro-Gly-|-Gly-Pro-Ala is cleaved, but not Z-(Gly)(5).. In terms of biological role, may play a specific role in the degradation of signal peptides after they are released from precursor forms of secreted proteins. Can cleave N-acetyl-L-Ala(4). The sequence is that of Oligopeptidase A (prlC) from Salmonella typhimurium (strain LT2 / SGSC1412 / ATCC 700720).